An 84-amino-acid polypeptide reads, in one-letter code: Keratin-associated protein 19-4 (84 aa).

The protein belongs to the KRTAP type 19 family. As to quaternary structure, interacts with hair keratins.

Its function is as follows. In the hair cortex, hair keratin intermediate filaments are embedded in an interfilamentous matrix, consisting of hair keratin-associated proteins (KRTAP), which are essential for the formation of a rigid and resistant hair shaft through their extensive disulfide bond cross-linking with abundant cysteine residues of hair keratins. The matrix proteins include the high-sulfur and high-glycine-tyrosine keratins. The sequence is that of Keratin-associated protein 19-4 (KRTAP19-4) from Homo sapiens (Human).